Consider the following 259-residue polypeptide: GTP cyclohydrolase FolE2 (259 aa).

The protein belongs to the GTP cyclohydrolase IV family.

It catalyses the reaction GTP + H2O = 7,8-dihydroneopterin 3'-triphosphate + formate + H(+). It participates in cofactor biosynthesis; 7,8-dihydroneopterin triphosphate biosynthesis; 7,8-dihydroneopterin triphosphate from GTP: step 1/1. In terms of biological role, converts GTP to 7,8-dihydroneopterin triphosphate. This is GTP cyclohydrolase FolE2 from Thermotoga petrophila (strain ATCC BAA-488 / DSM 13995 / JCM 10881 / RKU-1).